A 347-amino-acid chain; its full sequence is KRR1 small subunit processome component homolog (347 aa).

Residues 124–194 (GCDIIKIGNL…VRDIVLETMN (71 aa)) enclose the KH domain. Positions 231 to 246 (NKNLSKRKQPKVKKPK) are enriched in basic residues. The tract at residues 231–347 (NKNLSKRKQP…LLKANKKSKS (117 aa)) is disordered. A coiled-coil region spans residues 271-304 (FLNKEQKQAKRQQERQTKQAEAAKKQDERRNKDF). Composition is skewed to basic and acidic residues over residues 272–303 (LNKE…RNKD) and 318–329 (KANDNDSSDSRV). Over residues 337 to 347 (KLLKANKKSKS) the composition is skewed to basic residues.

This sequence belongs to the KRR1 family. As to quaternary structure, monomer. Component of the ribosomal small subunit (SSU) processome.

It localises to the nucleus. The protein resides in the nucleolus. Its function is as follows. Required for 40S ribosome biogenesis. Involved in nucleolar processing of pre-18S ribosomal RNA and ribosome assembly. Binds to RNA. Required for female germline development, cell viability during eye development and for survival of dividing cells and epithelial cells during early wing disk development. The polypeptide is KRR1 small subunit processome component homolog (Drosophila willistoni (Fruit fly)).